The chain runs to 289 residues: Methionyl-tRNA formyltransferase (289 aa).

(6S)-5,6,7,8-tetrahydrofolate is bound at residue 106-109 (SLLP).

It belongs to the Fmt family.

The enzyme catalyses L-methionyl-tRNA(fMet) + (6R)-10-formyltetrahydrofolate = N-formyl-L-methionyl-tRNA(fMet) + (6S)-5,6,7,8-tetrahydrofolate + H(+). Attaches a formyl group to the free amino group of methionyl-tRNA(fMet). The formyl group appears to play a dual role in the initiator identity of N-formylmethionyl-tRNA by promoting its recognition by IF2 and preventing the misappropriation of this tRNA by the elongation apparatus. The chain is Methionyl-tRNA formyltransferase from Mycoplasmopsis pulmonis (strain UAB CTIP) (Mycoplasma pulmonis).